The following is a 404-amino-acid chain: Zinc finger CCCH domain-containing protein 3 (404 aa).

C3H1-type zinc fingers lie at residues 47–75 (RPGE…HPTH), 90–118 (RIGQ…HPKD), 135–163 (RLGE…HPQP), 261–289 (SSDQ…HPGV), and 307–335 (RPGQ…HPML). Positions 350 to 374 (FASPVTTHQRISPTPNRSDSKSLSN) are enriched in polar residues. The interval 350 to 404 (FASPVTTHQRISPTPNRSDSKSLSNGKPDVKKESSETEKPDNGEVQDLSEDASSP) is disordered. Residues 377 to 391 (PDVKKESSETEKPDN) show a composition bias toward basic and acidic residues.

It is found in the nucleus. In terms of biological role, possesses RNA-binding and ribonuclease activities in vitro. This chain is Zinc finger CCCH domain-containing protein 3, found in Arabidopsis thaliana (Mouse-ear cress).